Consider the following 287-residue polypeptide: ATP synthase gamma chain (287 aa).

Belongs to the ATPase gamma chain family. As to quaternary structure, F-type ATPases have 2 components, CF(1) - the catalytic core - and CF(0) - the membrane proton channel. CF(1) has five subunits: alpha(3), beta(3), gamma(1), delta(1), epsilon(1). CF(0) has three main subunits: a, b and c.

The protein localises to the cell membrane. Functionally, produces ATP from ADP in the presence of a proton gradient across the membrane. The gamma chain is believed to be important in regulating ATPase activity and the flow of protons through the CF(0) complex. The chain is ATP synthase gamma chain from Halothermothrix orenii (strain H 168 / OCM 544 / DSM 9562).